Consider the following 357-residue polypeptide: Peptide chain release factor 1 (357 aa).

Gln235 carries the N5-methylglutamine modification. The segment at 285 to 305 (KRHNEASAMRSAQVGSGDRSE) is disordered.

The protein belongs to the prokaryotic/mitochondrial release factor family. Post-translationally, methylated by PrmC. Methylation increases the termination efficiency of RF1.

It is found in the cytoplasm. In terms of biological role, peptide chain release factor 1 directs the termination of translation in response to the peptide chain termination codons UAG and UAA. This chain is Peptide chain release factor 1 (prfA), found in Chlamydia pneumoniae (Chlamydophila pneumoniae).